Here is a 295-residue protein sequence, read N- to C-terminus: Acetylglutamate kinase (295 aa).

Substrate contacts are provided by residues Gly66–Gly67, Arg88, and Asn193.

It belongs to the acetylglutamate kinase family. ArgB subfamily.

The protein localises to the cytoplasm. It catalyses the reaction N-acetyl-L-glutamate + ATP = N-acetyl-L-glutamyl 5-phosphate + ADP. Its pathway is amino-acid biosynthesis; L-arginine biosynthesis; N(2)-acetyl-L-ornithine from L-glutamate: step 2/4. Its function is as follows. Catalyzes the ATP-dependent phosphorylation of N-acetyl-L-glutamate. This chain is Acetylglutamate kinase, found in Rhizobium leguminosarum bv. trifolii (strain WSM2304).